Here is a 473-residue protein sequence, read N- to C-terminus: Argininosuccinate lyase (473 aa).

Residue Ala2 is modified to N-acetylalanine. Lys7 is modified (N6-acetyllysine). Ser27 is a 2-(N(omega)-L-arginino)succinate binding site. An N6-acetyllysine modification is found at Lys69. 2-(N(omega)-L-arginino)succinate is bound by residues Asn114 and Thr159. The Proton acceptor role is filled by His160. Catalysis depends on Ser281, which acts as the Proton donor. N6-acetyllysine is present on Lys288. Positions 289, 321, 326, and 329 each coordinate 2-(N(omega)-L-arginino)succinate.

This sequence belongs to the lyase 1 family. Argininosuccinate lyase subfamily. In terms of assembly, homotetramer. Forms tissue-specific complexes with ASS1, SLC7A1, HSP90AA1 and nitric oxide synthase NOS1, NOS2 or NOS3; the complex maintenance is independent of ASL catalytic function. Acetylation modifies enzyme activity in response to alterations of extracellular nutrient availability. Acetylation increased with trichostin A (TSA) or with nicotinamide (NAM). Glucose increases acetylation by about a factor of 3 with decreasing enzyme activity. Acetylation on Lys-288 is decreased on the addition of extra amino acids resulting in activation of enzyme activity.

It carries out the reaction 2-(N(omega)-L-arginino)succinate = fumarate + L-arginine. Its pathway is amino-acid biosynthesis; L-arginine biosynthesis; L-arginine from L-ornithine and carbamoyl phosphate: step 3/3. It participates in nitrogen metabolism; urea cycle; L-arginine and fumarate from (N(omega)-L-arginino)succinate: step 1/1. Enzyme activity is regulated by acetylation. Catalyzes the reversible cleavage of L-argininosuccinate to fumarate and L-arginine, an intermediate step reaction in the urea cycle mostly providing for hepatic nitrogen detoxification into excretable urea as well as de novo L-arginine synthesis in nonhepatic tissues. Essential regulator of intracellular and extracellular L-arginine pools. As part of citrulline-nitric oxide cycle, forms tissue-specific multiprotein complexes with argininosuccinate synthase ASS1, transport protein SLC7A1 and nitric oxide synthase NOS1, NOS2 or NOS3, allowing for cell-autonomous L-arginine synthesis while channeling extracellular L-arginine to nitric oxide synthesis pathway. The protein is Argininosuccinate lyase (ASL) of Bos taurus (Bovine).